The primary structure comprises 268 residues: Hydroxyacylglutathione hydrolase (268 aa).

Zn(2+) contacts are provided by H56, H58, D60, H61, H112, D137, and H176. H176–Y178 lines the substrate pocket.

It belongs to the metallo-beta-lactamase superfamily. Glyoxalase II family. In terms of assembly, monomer. The cofactor is Zn(2+).

The enzyme catalyses an S-(2-hydroxyacyl)glutathione + H2O = a 2-hydroxy carboxylate + glutathione + H(+). It participates in secondary metabolite metabolism; methylglyoxal degradation; (R)-lactate from methylglyoxal: step 2/2. Functionally, thiolesterase that catalyzes the hydrolysis of S-D-lactoyl-glutathione to form glutathione and D-lactic acid. The chain is Hydroxyacylglutathione hydrolase (hagh) from Dictyostelium discoideum (Social amoeba).